The chain runs to 500 residues: Probable cytosol aminopeptidase (500 aa).

Residues lysine 265 and aspartate 270 each coordinate Mn(2+). Lysine 277 is an active-site residue. 3 residues coordinate Mn(2+): aspartate 288, aspartate 347, and glutamate 349. The active site involves arginine 351.

This sequence belongs to the peptidase M17 family. Requires Mn(2+) as cofactor.

Its subcellular location is the cytoplasm. The enzyme catalyses Release of an N-terminal amino acid, Xaa-|-Yaa-, in which Xaa is preferably Leu, but may be other amino acids including Pro although not Arg or Lys, and Yaa may be Pro. Amino acid amides and methyl esters are also readily hydrolyzed, but rates on arylamides are exceedingly low.. It carries out the reaction Release of an N-terminal amino acid, preferentially leucine, but not glutamic or aspartic acids.. Its function is as follows. Presumably involved in the processing and regular turnover of intracellular proteins. Catalyzes the removal of unsubstituted N-terminal amino acids from various peptides. This is Probable cytosol aminopeptidase from Rickettsia peacockii (strain Rustic).